The primary structure comprises 185 residues: Elongation factor P (185 aa).

This sequence belongs to the elongation factor P family.

It localises to the cytoplasm. It participates in protein biosynthesis; polypeptide chain elongation. Functionally, involved in peptide bond synthesis. Stimulates efficient translation and peptide-bond synthesis on native or reconstituted 70S ribosomes in vitro. Probably functions indirectly by altering the affinity of the ribosome for aminoacyl-tRNA, thus increasing their reactivity as acceptors for peptidyl transferase. This chain is Elongation factor P, found in Clostridium novyi (strain NT).